Reading from the N-terminus, the 549-residue chain is Zinc finger protein 266 (549 aa).

Positions 1–42 (MLENYKNLATVGYQLFKPSLISWLEQEESRTVQRGDFQASEW) constitute a KRAB domain. The segment at 156–178 (FDCSDSGKSFINHSHLQGHLRTH) adopts a C2H2-type 1; degenerate zinc-finger fold. The C2H2-type 2; degenerate zinc-finger motif lies at 184–206 (HEWKECGRGFIHSTDLAVRIQTH). 12 consecutive C2H2-type zinc fingers follow at residues 212-234 (YKCK…MGTH), 240-262 (YECK…RKTH), 268-290 (YKCK…MKIH), 296-318 (YECK…LKTH), 324-346 (FECK…FRIH), 352-374 (YKCK…ARTH), 380-402 (YECK…TRTH), 408-430 (FECV…LRIH), 436-458 (FECL…MRTH), 464-486 (FTCM…MRIH), 492-514 (YKCK…ERTH), and 520-542 (YECK…ERRH). Residues 530 to 549 (SSSSSFRNHERRHADERLSA) are disordered.

This sequence belongs to the krueppel C2H2-type zinc-finger protein family.

The protein localises to the nucleus. Its function is as follows. May be involved in transcriptional regulation. This Homo sapiens (Human) protein is Zinc finger protein 266 (ZNF266).